Here is a 320-residue protein sequence, read N- to C-terminus: MEAIRHDWTLEEIEDLLNTPLLELVHRAQTVHRDYQPANAIQLATLLSVKTGGCSENCAYCPQSAHYNTEVDPQSTLPIETVLEQAERAKAAGASRFCMGWAWREIRDGAQFDAMLEMVQGVRQLGLEACVTAGMLSDRQAERLAEAGLTAYNHNLDTSPEFYGEIISTRTYADRLATLERVRQAGISVCCGGIIGMGEGQRDRAGLLQVLATLNPHPESVPINALVPVEGTPLGDRDRLDPLDLVRMCAVARILMPKARVRLSAGRTALSREAQVLCFLAGANSIFYGDTLLTTANPVCEADRQLLADIGAEALEVVTA.

One can recognise a Radical SAM core domain in the interval 39–267 (NAIQLATLLS…KARVRLSAGR (229 aa)). Cys-54, Cys-58, and Cys-61 together coordinate [4Fe-4S] cluster. Residues Cys-98, Cys-130, Cys-190, and Arg-262 each coordinate [2Fe-2S] cluster.

This sequence belongs to the radical SAM superfamily. Biotin synthase family. In terms of assembly, homodimer. Requires [4Fe-4S] cluster as cofactor. [2Fe-2S] cluster serves as cofactor.

The enzyme catalyses (4R,5S)-dethiobiotin + (sulfur carrier)-SH + 2 reduced [2Fe-2S]-[ferredoxin] + 2 S-adenosyl-L-methionine = (sulfur carrier)-H + biotin + 2 5'-deoxyadenosine + 2 L-methionine + 2 oxidized [2Fe-2S]-[ferredoxin]. It functions in the pathway cofactor biosynthesis; biotin biosynthesis; biotin from 7,8-diaminononanoate: step 2/2. In terms of biological role, catalyzes the conversion of dethiobiotin (DTB) to biotin by the insertion of a sulfur atom into dethiobiotin via a radical-based mechanism. This chain is Biotin synthase, found in Synechococcus elongatus (strain ATCC 33912 / PCC 7942 / FACHB-805) (Anacystis nidulans R2).